Reading from the N-terminus, the 159-residue chain is Small ribosomal subunit protein uS4 (159 aa).

An S4 RNA-binding domain is found at 106–158 (RRLQTIVYRMGLAKSIYHARQLIVHGHIAIEGRRVTSPGFLVPRELEDKITLV).

This sequence belongs to the universal ribosomal protein uS4 family. As to quaternary structure, part of the 30S ribosomal subunit. Contacts protein S5. The interaction surface between S4 and S5 is involved in control of translational fidelity.

Functionally, one of the primary rRNA binding proteins, it binds directly to 16S rRNA where it nucleates assembly of the body of the 30S subunit. Its function is as follows. With S5 and S12 plays an important role in translational accuracy. The chain is Small ribosomal subunit protein uS4 from Pyrobaculum arsenaticum (strain DSM 13514 / JCM 11321 / PZ6).